Consider the following 473-residue polypeptide: MKTLYSLRRFYPVETLFNGTLALAGRDQETTGFAWWAGNARLINLSGKLLGAHVAHAGLIVFWAGAMNLFEVAHFVPEKPMYEQGLILLPHLATLGWGVGPGGEVIDTFPYFVSGVLHLISSAVLGFGGIYHALLGPETLEESFPFFGYVWKDRNKMTTILGIHLILLGVGAFLLVFKALYFGGVYDTWAPGGGDVRKITNLTLSPSVIFGYLLKSPFGGEGWIVSVDDLEDIIGGHVWLGFICILGGIWHILTKPFAWARRAFVWSGEAYLSYSLGALSIFGFIACCFVWFNNTAYPSEFYGPTGPEASQAQAFTFLVRDQRLGANVGSAQGPTGLGKYLMRSPTGEVIFGGETMRFWDLRAPWLEPLRGPNGLDLSRLKKDIQPWQERRSAEYMTHAPLGSLNSVGGVATEINAVNYVSPRSWLATSHFVLGFFLFVGHLWHAGRARAAAAGFEKGIDRDFEPVLSMTPLN.

A propeptide spanning residues 1–14 is cleaved from the precursor; the sequence is MKTLYSLRRFYPVE. Threonine 15 bears the N-acetylthreonine mark. Threonine 15 carries the phosphothreonine modification. 5 consecutive transmembrane segments (helical) span residues 69–93, 134–155, 178–200, 255–275, and 291–312; these read LFEVAHFVPEKPMYEQGLILLPHLA, LLGPETLEESFPFFGYVWKDRN, KALYFGGVYDTWAPGGGDVRKIT, KPFAWARRAFVWSGEAYLSYS, and WFNNTAYPSEFYGPTGPEASQA. A [CaMn4O5] cluster-binding site is contributed by glutamate 367. A helical transmembrane segment spans residues 447 to 471; sequence RARAAAAGFEKGIDRDFEPVLSMTP.

The protein belongs to the PsbB/PsbC family. PsbC subfamily. PSII is composed of 1 copy each of membrane proteins PsbA, PsbB, PsbC, PsbD, PsbE, PsbF, PsbH, PsbI, PsbJ, PsbK, PsbL, PsbM, PsbT, PsbX, PsbY, PsbZ, Psb30/Ycf12, at least 3 peripheral proteins of the oxygen-evolving complex and a large number of cofactors. It forms dimeric complexes. It depends on Binds multiple chlorophylls and provides some of the ligands for the Ca-4Mn-5O cluster of the oxygen-evolving complex. It may also provide a ligand for a Cl- that is required for oxygen evolution. PSII binds additional chlorophylls, carotenoids and specific lipids. as a cofactor.

The protein resides in the plastid. It localises to the chloroplast thylakoid membrane. Its function is as follows. One of the components of the core complex of photosystem II (PSII). It binds chlorophyll and helps catalyze the primary light-induced photochemical processes of PSII. PSII is a light-driven water:plastoquinone oxidoreductase, using light energy to abstract electrons from H(2)O, generating O(2) and a proton gradient subsequently used for ATP formation. This is Photosystem II CP43 reaction center protein from Amborella trichopoda.